We begin with the raw amino-acid sequence, 580 residues long: Serine/threonine-protein kinase PINK1, mitochondrial (580 aa).

Residues 1–77 constitute a mitochondrion transit peptide; sequence MAVRQALGRG…RFFRQSVAGL (77 aa). The disordered stretch occupies residues 28–60; the sequence is VSGWGKPGPGAAWGRGERPGRVSSPGAQPRPLG. The helical transmembrane segment at 94 to 110 threads the bilayer; the sequence is GPCGRAVFLAFGLGLGL. The tract at residues 111–117 is required for outer membrane localization; that stretch reads IEEKQAE. Positions 156 to 510 constitute a Protein kinase domain; it reads YLIGQAIGKG…IAANVLHLSL (355 aa). Residues 162–170 and Lys-218 each bind ATP; that span reads IGKGCNAAV. Ser-227 carries the post-translational modification Phosphoserine; by autocatalysis. Catalysis depends on Asp-361, which acts as the Proton acceptor. Ser-401 carries the post-translational modification Phosphoserine; by autocatalysis.

The protein belongs to the protein kinase superfamily. Ser/Thr protein kinase family. Upon mitochondrial depolarization, it forms a supercomplex with TOM and TIM23 complexes. PINK1-TOM-TIM23 supercomplex formation requires PINK1 interaction with TOMM20 and TOMM70 and is critical for PINK1 stabilization at the outer mitochondrial membrane, kinase activation and downstream mitophagy. Upon mitochondrial depolarization, interacts with TIMM23; the interaction is required for PINK1 accumulation at the outer mitochondrial membrane, kinase activation by autophosphorylation and PRKN recruitement to mitochondria. Interacts with PRKN. Interacts with FBXO7. Forms a complex with PRKN and PARK7. Interacts with NENF. Requires Mg(2+) as cofactor. Post-translationally, proteolytically cleaved. In healthy cells, the precursor is continuously imported into the inner mitochondrial membrane (IMM), where it is proteolytically cleaved by mitochondrial-processing peptidase (MPP) and then undergoes further proteolytic cleavage by PARL or AFG3L2 to give rise to the 52 kDa short form. The 52 kDa short form is then released into the cytosol where it rapidly undergoes proteasome-dependent degradation. In unhealthy cells, when cellular stress conditions lead to the loss of mitochondrial membrane potential, mitochondrial import is impaired leading to the precursor accumulating on the outer mitochondrial membrane (OMM). If accumulation at the OMM fails and it is imported into the depolarized mitochondria, it undergoes cleavage by the IMM protease OMA1, promoting its subsequent degradation by the proteasome. Autophosphorylated. Loss of mitochondrial membrane potential results in the precursor accumulating on the outer mitochondrial membrane (OMM) where it is activated by autophosphorylation. Autophosphorylation at Ser-227 and Ser-401 is sufficient and essential for selective recruitment of PRKN to depolarized mitochondria, via PINK1-dependent phosphorylation of ubiquitin and maybe PRKN.

The protein resides in the mitochondrion outer membrane. It localises to the mitochondrion inner membrane. Its subcellular location is the cytoplasm. It is found in the cytosol. It catalyses the reaction L-seryl-[protein] + ATP = O-phospho-L-seryl-[protein] + ADP + H(+). The enzyme catalyses L-threonyl-[protein] + ATP = O-phospho-L-threonyl-[protein] + ADP + H(+). Functionally, serine/threonine-protein kinase which acts as a sensor of mitochondrial damage and protects against mitochondrial dysfunction during cellular stress. It phosphorylates mitochondrial proteins to coordinate mitochondrial quality control mechanisms that remove and replace dysfunctional mitochondrial components. Depending on the severity of mitochondrial damage, activity ranges from preventing apoptosis and stimulating mitochondrial biogenesis to eliminating severely damaged mitochondria via PINK1-PRKN-dependent mitophagy. When cellular stress results in irreversible mitochondrial damage, PINK1 accumulates at the outer mitochondrial membrane (OMM) where it phosphorylates pre-existing polyubiquitin chains at 'Ser-65', recruits PRKN from the cytosol to the OMM and activates PRKN by phosphorylation at 'Ser-65'; activated PRKN then ubiquinates VDAC1 and other OMM proteins to initiate mitophagy. The PINK1-PRKN pathway also promotes fission of damaged mitochondria through phosphorylation and PRKN-dependent degradation of mitochondrial proteins involved in fission such as MFN2. This prevents the refusion of unhealthy mitochondria with the mitochondrial network or initiates mitochondrial fragmentation facilitating their later engulfment by autophagosomes. Also promotes mitochondrial fission independently of PRKN and ATG7-mediated mitophagy, via the phosphorylation and activation of DNM1L. Regulates motility of damaged mitochondria by promoting the ubiquitination and subsequent degradation of MIRO1 and MIRO2; in motor neurons, this likely inhibits mitochondrial intracellular anterograde transport along the axons which probably increases the chance of the mitochondria undergoing mitophagy in the soma. Required for ubiquinone reduction by mitochondrial complex I by mediating phosphorylation of complex I subunit NDUFA10. Phosphorylates LETM1, positively regulating its mitochondrial calcium transport activity. This is Serine/threonine-protein kinase PINK1, mitochondrial from Rattus norvegicus (Rat).